The primary structure comprises 66 residues: DNA-directed RNA polymerase subunit Rpo10 (66 aa).

4 residues coordinate Zn(2+): C7, C10, C44, and C45.

Belongs to the archaeal Rpo10/eukaryotic RPB10 RNA polymerase subunit family. Part of the RNA polymerase complex. Requires Zn(2+) as cofactor.

The protein localises to the cytoplasm. The catalysed reaction is RNA(n) + a ribonucleoside 5'-triphosphate = RNA(n+1) + diphosphate. DNA-dependent RNA polymerase (RNAP) catalyzes the transcription of DNA into RNA using the four ribonucleoside triphosphates as substrates. The polypeptide is DNA-directed RNA polymerase subunit Rpo10 (Pyrobaculum islandicum (strain DSM 4184 / JCM 9189 / GEO3)).